The following is a 353-amino-acid chain: Guanine nucleotide-binding protein alpha-1 subunit (353 aa).

Gly-2 carries N-myristoyl glycine lipidation. Cys-3 carries the S-palmitoyl cysteine lipid modification. The G-alpha domain maps to 32 to 353 (NEIKMLLLGA…QVNLRDCGLL (322 aa)). Residues 35 to 48 (KMLLLGAGESGKST) form a G1 motif region. GTP contacts are provided by Glu-43, Ser-44, Gly-45, Lys-46, Ser-47, Thr-48, Asp-150, Leu-175, Thr-181, Gly-203, Asn-269, Lys-270, Asp-272, and Ala-325. Ser-47 is a binding site for Mg(2+). Residues 173-181 (DVLRSRVKT) are G2 motif. Position 181 (Thr-181) interacts with Mg(2+). The segment at 196 to 205 (YKLFDVGGQR) is G3 motif. Residues 265–272 (ILFLNKID) are G4 motif. Positions 323 to 328 (TCATDT) are G5 motif.

The protein belongs to the G-alpha family. In terms of assembly, g proteins are composed of 3 units; alpha, beta and gamma. The alpha chain contains the guanine nucleotide binding site. Mg(2+) serves as cofactor.

In terms of biological role, guanine nucleotide-binding proteins (G proteins) are involved as modulators or transducers in various transmembrane signaling systems. The chain is Guanine nucleotide-binding protein alpha-1 subunit (GPA1) from Mycosarcoma maydis (Corn smut fungus).